The primary structure comprises 565 residues: NAD-dependent malic enzyme (565 aa).

The active-site Proton donor is the Tyr-104. An NAD(+)-binding site is contributed by Arg-157. The Proton acceptor role is filled by Lys-175. A divalent metal cation is bound by residues Glu-246, Asp-247, and Asp-270. 2 residues coordinate NAD(+): Asp-270 and Asn-418.

The protein belongs to the malic enzymes family. Homotetramer. It depends on Mg(2+) as a cofactor. Requires Mn(2+) as cofactor.

It carries out the reaction (S)-malate + NAD(+) = pyruvate + CO2 + NADH. The enzyme catalyses oxaloacetate + H(+) = pyruvate + CO2. The chain is NAD-dependent malic enzyme from Edwardsiella ictaluri (strain 93-146).